The chain runs to 414 residues: Serine hydroxymethyltransferase (414 aa).

(6S)-5,6,7,8-tetrahydrofolate contacts are provided by residues Leu-121 and 125-127; that span reads GHL. An N6-(pyridoxal phosphate)lysine modification is found at Lys-229.

Belongs to the SHMT family. As to quaternary structure, homodimer. The cofactor is pyridoxal 5'-phosphate.

The protein localises to the cytoplasm. It carries out the reaction (6R)-5,10-methylene-5,6,7,8-tetrahydrofolate + glycine + H2O = (6S)-5,6,7,8-tetrahydrofolate + L-serine. Its pathway is one-carbon metabolism; tetrahydrofolate interconversion. The protein operates within amino-acid biosynthesis; glycine biosynthesis; glycine from L-serine: step 1/1. Catalyzes the reversible interconversion of serine and glycine with tetrahydrofolate (THF) serving as the one-carbon carrier. This reaction serves as the major source of one-carbon groups required for the biosynthesis of purines, thymidylate, methionine, and other important biomolecules. Also exhibits THF-independent aldolase activity toward beta-hydroxyamino acids, producing glycine and aldehydes, via a retro-aldol mechanism. The chain is Serine hydroxymethyltransferase from Polaromonas sp. (strain JS666 / ATCC BAA-500).